Reading from the N-terminus, the 397-residue chain is Ethanolaminephosphotransferase 1 (397 aa).

A2 carries the post-translational modification N-acetylalanine. The next 10 helical transmembrane spans lie at 47 to 69 (WLAPNLITFSGFLLVVFNFLLMA), 84 to 103 (HVPDWVWIVVGILNFVAYTL), 123 to 145 (LFDHGLDSWSCVYFVVTVYSIFG), 150 to 172 (GVSVFVLYLLLWVVLFSFILSHW), 179 to 201 (ILFLPWGYDISQVTISFVYIVTA), 221 to 243 (LFTAMIIGCALCVTLPMSLLNFF), 256 to 278 (VYEAMVPLFSPCLLFILSTAWIL), 291 to 310 (VFYFMVGTAFANSTCQLIVC), 317 to 339 (CPTLNWLLVPLFLVVLVVNLGVA), and 344 to 366 (SILLYTLTTAFTLAHIHYGVRVV). A non-standard amino acid (selenocysteine) is located at residue U387.

This sequence belongs to the CDP-alcohol phosphatidyltransferase class-I family. Mg(2+) serves as cofactor. Mn(2+) is required as a cofactor. As to expression, widely expressed. Abundant in brain, placenta, liver and pancreas, followed by heart, skeletal muscle, lung and kidney. In brain it is strongly expressed in cerebellum, followed by the occipital pole and the frontal lobe.

The protein localises to the endoplasmic reticulum membrane. It catalyses the reaction CDP-ethanolamine + a 1,2-diacyl-sn-glycerol = a 1,2-diacyl-sn-glycero-3-phosphoethanolamine + CMP + H(+). It carries out the reaction 1-O-alkyl-2-acyl-sn-glycerol + CDP-ethanolamine = a 1-O-alkyl-2-acyl-sn-glycero-3-phosphoethanolamine + CMP + H(+). It participates in phospholipid metabolism; phosphatidylethanolamine biosynthesis; phosphatidylethanolamine from ethanolamine: step 3/3. Ethanolaminephosphotransferase that catalyzes the transfer of phosphoethanolamine (PE) from CDP-ethanolamine to lipid acceptors, the final step in the synthesis of PE via the 'Kennedy' pathway. PE is the second most abundant phospholipid of membranes in mammals and is involved in various membrane-related cellular processes. The enzyme is critical for the synthesis of several PE species and also catalyzes the synthesis of plasmanyl-PE, a lipid required for proper myelination and neurodevelopment, from 1-alkyl-2-acylglycerol. This Homo sapiens (Human) protein is Ethanolaminephosphotransferase 1.